A 645-amino-acid polypeptide reads, in one-letter code: DNA ligase (645 aa).

NAD(+) contacts are provided by residues 30–34 (DAEFD) and 72–73 (SQ). Residue Lys99 is the N6-AMP-lysine intermediate of the active site. NAD(+) is bound by residues Arg120, Glu163, Lys275, and Lys296. Residues Cys387, Cys390, Cys403, and Cys408 each contribute to the Zn(2+) site. The 82-residue stretch at 564–645 (EEGAVLKGLS…EAFLNLIGKV (82 aa)) folds into the BRCT domain.

The protein belongs to the NAD-dependent DNA ligase family. LigA subfamily. The cofactor is Mg(2+). Requires Mn(2+) as cofactor.

The catalysed reaction is NAD(+) + (deoxyribonucleotide)n-3'-hydroxyl + 5'-phospho-(deoxyribonucleotide)m = (deoxyribonucleotide)n+m + AMP + beta-nicotinamide D-nucleotide.. DNA ligase that catalyzes the formation of phosphodiester linkages between 5'-phosphoryl and 3'-hydroxyl groups in double-stranded DNA using NAD as a coenzyme and as the energy source for the reaction. It is essential for DNA replication and repair of damaged DNA. This Treponema denticola (strain ATCC 35405 / DSM 14222 / CIP 103919 / JCM 8153 / KCTC 15104) protein is DNA ligase.